Here is a 445-residue protein sequence, read N- to C-terminus: Tubby-like F-box protein 8 (445 aa).

Residues 56-102 (ESRWASLPPELLRDVIRRLEASESTWPSRKDVVSCAAVCKAWREMCK) form the F-box domain.

The protein belongs to the TUB family. Ubiquitous.

In Oryza sativa subsp. japonica (Rice), this protein is Tubby-like F-box protein 8 (TULP8).